The primary structure comprises 430 residues: Signal recognition particle receptor FtsY (430 aa).

Residues 75-95 (DTGELPAVGDDATVPRDSPRH) form a disordered region. GTP is bound by residues 238–245 (GVNGTGKT), 320–324 (DTAGR), and 382–385 (TKLD).

It belongs to the GTP-binding SRP family. FtsY subfamily. Part of the signal recognition particle protein translocation system, which is composed of SRP and FtsY.

The protein resides in the cell membrane. It localises to the cytoplasm. The enzyme catalyses GTP + H2O = GDP + phosphate + H(+). Involved in targeting and insertion of nascent membrane proteins into the cytoplasmic membrane. Acts as a receptor for the complex formed by the signal recognition particle (SRP) and the ribosome-nascent chain (RNC). The polypeptide is Signal recognition particle receptor FtsY (Mycobacterium leprae (strain TN)).